The chain runs to 768 residues: Probable beta-glucosidase M (768 aa).

The first 19 residues, 1–19 (MHAIAGLTGLLAGVSLSYA), serve as a signal peptide directing secretion. Asn-25, Asn-72, and Asn-259 each carry an N-linked (GlcNAc...) asparagine glycan. Asp-287 is a catalytic residue. 7 N-linked (GlcNAc...) asparagine glycosylation sites follow: Asn-315, Asn-322, Asn-394, Asn-434, Asn-472, Asn-543, and Asn-651.

The protein belongs to the glycosyl hydrolase 3 family.

It localises to the secreted. The catalysed reaction is Hydrolysis of terminal, non-reducing beta-D-glucosyl residues with release of beta-D-glucose.. It functions in the pathway glycan metabolism; cellulose degradation. Beta-glucosidases are one of a number of cellulolytic enzymes involved in the degradation of cellulosic biomass. Catalyzes the last step releasing glucose from the inhibitory cellobiose. The chain is Probable beta-glucosidase M (bglM) from Aspergillus oryzae (strain ATCC 42149 / RIB 40) (Yellow koji mold).